Here is a 204-residue protein sequence, read N- to C-terminus: Large ribosomal subunit protein eL15 (204 aa).

The protein belongs to the eukaryotic ribosomal protein eL15 family. As to quaternary structure, component of the large ribosomal subunit.

The protein localises to the cytoplasm. Component of the large ribosomal subunit. The ribosome is a large ribonucleoprotein complex responsible for the synthesis of proteins in the cell. This is Large ribosomal subunit protein eL15 (rpl15) from Silurus meridionalis (Southern catfish).